Here is a 316-residue protein sequence, read N- to C-terminus: Pantothenate kinase (316 aa).

An ATP-binding site is contributed by 95–102 (GSVAVGKS).

It belongs to the prokaryotic pantothenate kinase family.

The protein resides in the cytoplasm. The enzyme catalyses (R)-pantothenate + ATP = (R)-4'-phosphopantothenate + ADP + H(+). It functions in the pathway cofactor biosynthesis; coenzyme A biosynthesis; CoA from (R)-pantothenate: step 1/5. This chain is Pantothenate kinase, found in Salmonella choleraesuis (strain SC-B67).